The following is a 510-amino-acid chain: Maturase K (510 aa).

The protein belongs to the intron maturase 2 family. MatK subfamily.

The protein resides in the plastid. It is found in the chloroplast. In terms of biological role, usually encoded in the trnK tRNA gene intron. Probably assists in splicing its own and other chloroplast group II introns. In Populus trichocarpa (Western balsam poplar), this protein is Maturase K.